Reading from the N-terminus, the 1204-residue chain is Bromodomain and PHD finger-containing protein 3 (1204 aa).

Disordered stretches follow at residues 1 to 27 (MRKPRRKSRQNAEGRRSPSPYSLKCSP) and 76 to 127 (SNKE…TGSQ). Residues 89 to 99 (KSKKPSSKGKR) are compositionally biased toward basic residues. The PHD-type 1 zinc-finger motif lies at 212–262 (DAFCCVCLDDECHNSNVILFCDICNLAVHQECYGVPYIPEGQWLCRCCLQS). The C2HC pre-PHD-type zinc-finger motif lies at 266–299 (PVDCVLCPNKGGAFKQTSDGHWAHVVCAIWIPEV). The PHD-type 2 zinc finger occupies 323-387 (LTCYICKQKG…RKTAYCEAHS (65 aa)). Residues 393 to 464 (ARRKGDSPRS…KKEPEEAGRE (72 aa)) form a disordered region. Serine 399 and serine 402 each carry phosphoserine. Acidic residues predominate over residues 417–429 (GEEEQEEAEEEGQ). Positions 442–454 (VSKKGKMSLKQKI) are enriched in basic residues. An N6-acetyllysine mark is found at lysine 445, lysine 447, and lysine 670. The region spanning 588-692 (LELMPFTVLL…DLGGAILRHA (105 aa)) is the Bromo domain. A phosphoserine mark is found at serine 712 and serine 739. Residues 778-879 (RQKLAQPPPP…FLKSRKVEDE (102 aa)) form a disordered region. Residues 816–826 (QQEEPEEEGDR) are compositionally biased toward acidic residues. 3 positions are modified to phosphoserine: serine 899, serine 961, and serine 964. The disordered stretch occupies residues 903 to 1015 (IDRLSLTNPD…ESGSDSECSL (113 aa)). A compositionally biased stretch (basic and acidic residues) spans 979–990 (SCSDSEGERSPQ). The region spanning 1075–1158 (PLELVWAKCR…RDKVLPLGVE (84 aa)) is the PWWP domain.

As to quaternary structure, component of some HBO1 complexes composed of KAT7/HBO1, MEAF6, ING4 or ING5, and BRPF3. Component of the MOZ/MORF complex composed at least of ING5, KAT6A, KAT6B, MEAF6 and one of BRPF1, BRD1/BRPF2 and BRPF3. Interacts with KAT7/HBO1; the interaction is direct. In terms of tissue distribution, highly expressed in the adult testis and brain.

The protein resides in the nucleus. Its function is as follows. Scaffold subunit of various histone acetyltransferase (HAT) complexes, such as the MOZ/MORF and HBO1 complexes, which have a histone H3 acetyltransferase activity. Plays a role in DNA replication initiation by directing KAT7/HBO1 specificity towards histone H3 'Lys-14' acetylation (H3K14ac), thereby facilitating the activation of replication origins. Component of the MOZ/MORF complex which has a histone H3 acetyltransferase activity. In Mus musculus (Mouse), this protein is Bromodomain and PHD finger-containing protein 3.